The sequence spans 363 residues: uncharacterized protein (363 aa).

4 residues coordinate S-adenosyl-L-methionine: Q198, Y225, E246, and D291. C318 functions as the Nucleophile in the catalytic mechanism.

This sequence belongs to the class I-like SAM-binding methyltransferase superfamily. RNA M5U methyltransferase family.

This is an uncharacterized protein from Mycoplasma mobile (strain ATCC 43663 / 163K / NCTC 11711) (Mesomycoplasma mobile).